We begin with the raw amino-acid sequence, 440 residues long: tRNA(Ile)-lysidine synthase (440 aa).

31–36 contributes to the ATP binding site; the sequence is SGGADS.

Belongs to the tRNA(Ile)-lysidine synthase family.

Its subcellular location is the cytoplasm. It catalyses the reaction cytidine(34) in tRNA(Ile2) + L-lysine + ATP = lysidine(34) in tRNA(Ile2) + AMP + diphosphate + H(+). In terms of biological role, ligates lysine onto the cytidine present at position 34 of the AUA codon-specific tRNA(Ile) that contains the anticodon CAU, in an ATP-dependent manner. Cytidine is converted to lysidine, thus changing the amino acid specificity of the tRNA from methionine to isoleucine. This is tRNA(Ile)-lysidine synthase from Borrelia garinii subsp. bavariensis (strain ATCC BAA-2496 / DSM 23469 / PBi) (Borreliella bavariensis).